Here is a 329-residue protein sequence, read N- to C-terminus: DNA repair and recombination protein RadA (329 aa).

107 to 114 (GEFGSGKS) contributes to the ATP binding site.

The protein belongs to the eukaryotic RecA-like protein family.

Its function is as follows. Involved in DNA repair and in homologous recombination. Binds and assemble on single-stranded DNA to form a nucleoprotein filament. Hydrolyzes ATP in a ssDNA-dependent manner and promotes DNA strand exchange between homologous DNA molecules. The chain is DNA repair and recombination protein RadA from Methanocorpusculum labreanum (strain ATCC 43576 / DSM 4855 / Z).